Reading from the N-terminus, the 292-residue chain is Protease HtpX homolog (292 aa).

2 helical membrane-spanning segments follow: residues 9 to 29 (TGVL…VLGN) and 31 to 51 (TGMM…YWYS). His133 provides a ligand contact to Zn(2+). Residue Glu134 is part of the active site. Residue His137 coordinates Zn(2+). Helical transmembrane passes span 148 to 168 (LAAV…WMLW) and 185 to 205 (LGAI…QMAI). Residue Glu210 participates in Zn(2+) binding.

Belongs to the peptidase M48B family. It depends on Zn(2+) as a cofactor.

The protein resides in the cell membrane. The polypeptide is Protease HtpX homolog (Thermococcus sibiricus (strain DSM 12597 / MM 739)).